The chain runs to 346 residues: MDSTEDLDYPQIIFQYSNGFLVSKVMFTACELGVFDLLLQSGRPLSLDVIAARLGTSIMGMERLLDACVGLKLLAVELRREGAFYRNTEISNIYLTKSSPKSQYHIMMYYSNTVYLCWHYLTDAVREGRNQYERAFGISSKDLFGARYRSEEEMLKFLAGQNSIWSICGRDVLTAFDLSPFTQIYDLGGGGGALAQECVFLYPNCTVTIYDLPKVVQVAKERLVPPEERRIAFHEGDFFKDSIPEADLYILSKILHDWDDKKCRQLLAEVYKACRPGGGVLLVESLLSEDRSGPVETQLYSLNMLVQTEGKERTAVEYSELLGAAGFREVQVRRTGKLYDAVLGRK.

Residues Y148, W165, D211, G236–F238, and K253 contribute to the S-adenosyl-L-methionine site. H256 functions as the Proton donor/acceptor in the catalytic mechanism. Substrate-binding residues include D257, N303, and Q307.

The protein belongs to the class I-like SAM-binding methyltransferase superfamily. Cation-independent O-methyltransferase family. In terms of assembly, homodimer. In terms of tissue distribution, expressed in pineal gland and retina.

It catalyses the reaction N-acetylserotonin + S-adenosyl-L-methionine = melatonin + S-adenosyl-L-homocysteine + H(+). The protein operates within aromatic compound metabolism; melatonin biosynthesis; melatonin from serotonin: step 1/2. In terms of biological role, catalyzes the transfer of a methyl group onto N-acetylserotonin, producing melatonin (N-acetyl-5-methoxytryptamine). This chain is Acetylserotonin O-methyltransferase (ASMT), found in Gallus gallus (Chicken).